A 315-amino-acid chain; its full sequence is Methionyl-tRNA formyltransferase (315 aa).

113-116 (SLLP) provides a ligand contact to (6S)-5,6,7,8-tetrahydrofolate.

This sequence belongs to the Fmt family.

It catalyses the reaction L-methionyl-tRNA(fMet) + (6R)-10-formyltetrahydrofolate = N-formyl-L-methionyl-tRNA(fMet) + (6S)-5,6,7,8-tetrahydrofolate + H(+). In terms of biological role, attaches a formyl group to the free amino group of methionyl-tRNA(fMet). The formyl group appears to play a dual role in the initiator identity of N-formylmethionyl-tRNA by promoting its recognition by IF2 and preventing the misappropriation of this tRNA by the elongation apparatus. The protein is Methionyl-tRNA formyltransferase of Shigella boydii serotype 4 (strain Sb227).